The chain runs to 199 residues: MARYTGPAWKLSRRLGISLSETGKELAKRPYAPGQHGNGRKKISEYDLQLQAKQALRHMYGVNEKQFRRIFNDAGKMPGIHGENFMFLLESRLDNLVYRFGLARTRRGARQLVNHGHITVDGSRVDIASYRVKPGQVIAVREKSKNVKAIAEALEVAPATKDFVSFDAEKLEGTFVRLPERAELNDQIKEQLIVEYYSR.

Residues serine 91–alanine 151 form the S4 RNA-binding domain.

Belongs to the universal ribosomal protein uS4 family. In terms of assembly, part of the 30S ribosomal subunit. Contacts protein S5. The interaction surface between S4 and S5 is involved in control of translational fidelity.

Its function is as follows. One of the primary rRNA binding proteins, it binds directly to 16S rRNA where it nucleates assembly of the body of the 30S subunit. With S5 and S12 plays an important role in translational accuracy. This chain is Small ribosomal subunit protein uS4, found in Exiguobacterium sp. (strain ATCC BAA-1283 / AT1b).